A 131-amino-acid polypeptide reads, in one-letter code: Lymphocyte antigen 6C1 (131 aa).

An N-terminal signal peptide occupies residues 1-26 (MDTSHTTKSCVLILLVALLCAERAQG). The UPAR/Ly6 domain maps to 27–115 (LQCYECYGVP…PTAGSTWTMA (89 aa)). 5 disulfide bridges follow: Cys-29/Cys-53, Cys-32/Cys-41, Cys-46/Cys-74, Cys-78/Cys-95, and Cys-96/Cys-101. The GPI-anchor amidated glycine moiety is linked to residue Gly-109. Residues 110–131 (STWTMAGVLLFSLSSVVLQTLL) constitute a propeptide, removed in mature form.

The protein resides in the cell membrane. This is Lymphocyte antigen 6C1 (Ly6c1) from Mus musculus (Mouse).